A 146-amino-acid polypeptide reads, in one-letter code: Large ribosomal subunit protein uL15 (146 aa).

Residues 1-55 (MGLRLNELSPGVGAKKTAQRRGRGIGSGLGKTGGRGVKGQKSRSGSSIRSGFEGG) form a disordered region. Residues 24–37 (GIGSGLGKTGGRGV) show a composition bias toward gly residues.

This sequence belongs to the universal ribosomal protein uL15 family. Part of the 50S ribosomal subunit.

Functionally, binds to the 23S rRNA. The sequence is that of Large ribosomal subunit protein uL15 from Psychrobacter cryohalolentis (strain ATCC BAA-1226 / DSM 17306 / VKM B-2378 / K5).